Here is a 152-residue protein sequence, read N- to C-terminus: Large ribosomal subunit protein bL9 (152 aa).

The protein belongs to the bacterial ribosomal protein bL9 family.

Its function is as follows. Binds to the 23S rRNA. In Parasynechococcus marenigrum (strain WH8102), this protein is Large ribosomal subunit protein bL9.